The chain runs to 491 residues: Protein nucleotidyltransferase YdiU (491 aa).

Residues G88, G90, R91, K111, D123, G124, R174, and R181 each coordinate ATP. The active-site Proton acceptor is D250. Mg(2+) is bound by residues N251 and D260. D260 is a binding site for ATP.

The protein belongs to the SELO family. It depends on Mg(2+) as a cofactor. Mn(2+) is required as a cofactor.

The enzyme catalyses L-seryl-[protein] + ATP = 3-O-(5'-adenylyl)-L-seryl-[protein] + diphosphate. The catalysed reaction is L-threonyl-[protein] + ATP = 3-O-(5'-adenylyl)-L-threonyl-[protein] + diphosphate. It carries out the reaction L-tyrosyl-[protein] + ATP = O-(5'-adenylyl)-L-tyrosyl-[protein] + diphosphate. It catalyses the reaction L-histidyl-[protein] + UTP = N(tele)-(5'-uridylyl)-L-histidyl-[protein] + diphosphate. The enzyme catalyses L-seryl-[protein] + UTP = O-(5'-uridylyl)-L-seryl-[protein] + diphosphate. The catalysed reaction is L-tyrosyl-[protein] + UTP = O-(5'-uridylyl)-L-tyrosyl-[protein] + diphosphate. Functionally, nucleotidyltransferase involved in the post-translational modification of proteins. It can catalyze the addition of adenosine monophosphate (AMP) or uridine monophosphate (UMP) to a protein, resulting in modifications known as AMPylation and UMPylation. The protein is Protein nucleotidyltransferase YdiU of Bradyrhizobium sp. (strain BTAi1 / ATCC BAA-1182).